The following is a 457-amino-acid chain: MKLGISGGAGEAMEGELSFVSPARSSCFSFEGGGSGSPTWVSTVEALLRSPTSSVSDGGGGGGGGYNSPARASSPLQKQIPYCRDAGDFSSLTWASTLEKPLESPSSCISDGRGGGFGSPTSAFPPEKLLISPPTCVSDNRGVGNVGGFPSLPWASSLERLLTSPSSCVSDSRGVGNADGFPSLPWASSLEKPLTSPSSCVSDGRSGGYSSPLGASAEREREVREAEMLLRAIAERYDDCFLRLRDAAAELSDLHRERLRLAAENLHLSLLLEELESEQRKQASAMAPPKLEEDEAAQGGAPKSISIRSPGYLSQKPPQGQARPQRLRVRASQAMEISHPNCLIFVMGNQCSPKEAAAAGDEEDEEDKGGGEVEVEAYRQGAAKTELCNKWERGACPYGARCRFAHGLQELRPVIRHPRYKTLPCQMFAAASGCPYGHRCHFRHSPLRAAAAESFCY.

Disordered stretches follow at residues 51–73 (PTSS…ARAS), 102–130 (LESP…EKLL), 195–221 (TSPS…ERER), and 280–329 (RKQA…RLRV). The segment covering 57 to 66 (DGGGGGGGGY) has biased composition (gly residues). A coiled-coil region spans residues 215-276 (ASAEREREVR…HLSLLLEELE (62 aa)). C3H1-type zinc fingers lie at residues 382–409 (AAKT…HGLQ) and 419–447 (RYKT…HSPL).

The chain is Putative zinc finger CCCH domain-containing protein 21 from Oryza sativa subsp. japonica (Rice).